Here is a 287-residue protein sequence, read N- to C-terminus: Small ribosomal subunit biogenesis GTPase RsgA (287 aa).

Positions 61-218 (ISQLKRPAVA…MVDTPGFSSL (158 aa)) constitute a CP-type G domain. GTP contacts are provided by residues 110 to 113 (NKLD) and 161 to 169 (GPSGVGKST). Residues C242, C247, H249, and C255 each coordinate Zn(2+).

It belongs to the TRAFAC class YlqF/YawG GTPase family. RsgA subfamily. Monomer. Associates with 30S ribosomal subunit, binds 16S rRNA. Requires Zn(2+) as cofactor.

The protein localises to the cytoplasm. In terms of biological role, one of several proteins that assist in the late maturation steps of the functional core of the 30S ribosomal subunit. Helps release RbfA from mature subunits. May play a role in the assembly of ribosomal proteins into the subunit. Circularly permuted GTPase that catalyzes slow GTP hydrolysis, GTPase activity is stimulated by the 30S ribosomal subunit. The sequence is that of Small ribosomal subunit biogenesis GTPase RsgA from Clostridium kluyveri (strain NBRC 12016).